The sequence spans 632 residues: tRNA uridine 5-carboxymethylaminomethyl modification enzyme MnmG (632 aa).

FAD-binding positions include 15–20 (GAGHAG), Ile-127, and Ser-182. Position 276–290 (276–290 (GPRYCPSIEDKIVRF)) interacts with NAD(+). Gln-373 contributes to the FAD binding site.

Belongs to the MnmG family. As to quaternary structure, homodimer. Heterotetramer of two MnmE and two MnmG subunits. Requires FAD as cofactor.

The protein localises to the cytoplasm. Functionally, NAD-binding protein involved in the addition of a carboxymethylaminomethyl (cmnm) group at the wobble position (U34) of certain tRNAs, forming tRNA-cmnm(5)s(2)U34. This is tRNA uridine 5-carboxymethylaminomethyl modification enzyme MnmG from Streptococcus pyogenes serotype M28 (strain MGAS6180).